The sequence spans 126 residues: uncharacterized protein (126 aa).

Residues 19-126 (IFERIIEGAV…LGGGLLGSIA (108 aa)) form the HIT domain. The short motif at 111 to 115 (HLHIH) is the Histidine triad motif element.

This is an uncharacterized protein from Chlamydia muridarum (strain MoPn / Nigg).